The chain runs to 444 residues: Adenylyltransferase and sulfurtransferase UBA4 (444 aa).

Residues G81, D102, 109–113, K126, and 170–171 contribute to the ATP site; these read SNLHR and DT. Positions 212 and 215 each coordinate Zn(2+). Residue C229 is the Glycyl thioester intermediate; for adenylyltransferase activity of the active site. Zn(2+) contacts are provided by C290 and C293. One can recognise a Rhodanese domain in the interval 343-442; the sequence is KTKPYVLLDV…YIDEINPSLP (100 aa). The active-site Cysteine persulfide intermediate; for sulfurtransferase activity is C401.

This sequence in the N-terminal section; belongs to the HesA/MoeB/ThiF family. UBA4 subfamily. Zn(2+) is required as a cofactor.

The protein resides in the cytoplasm. Its subcellular location is the cytosol. It functions in the pathway tRNA modification; 5-methoxycarbonylmethyl-2-thiouridine-tRNA biosynthesis. Its function is as follows. Plays a central role in 2-thiolation of mcm(5)S(2)U at tRNA wobble positions of cytosolic tRNA(Lys), tRNA(Glu) and tRNA(Gln). Acts by mediating the C-terminal thiocarboxylation of sulfur carrier URM1. Its N-terminus first activates URM1 as acyl-adenylate (-COAMP), then the persulfide sulfur on the catalytic cysteine is transferred to URM1 to form thiocarboxylation (-COSH) of its C-terminus. The reaction probably involves hydrogen sulfide that is generated from the persulfide intermediate and that acts as a nucleophile towards URM1. Subsequently, a transient disulfide bond is formed. Does not use thiosulfate as sulfur donor; NFS1 probably acting as a sulfur donor for thiocarboxylation reactions. Prior mcm(5) tRNA modification by the elongator complex is required for 2-thiolation. May also be involved in protein urmylation. The chain is Adenylyltransferase and sulfurtransferase UBA4 from Kluyveromyces lactis (strain ATCC 8585 / CBS 2359 / DSM 70799 / NBRC 1267 / NRRL Y-1140 / WM37) (Yeast).